A 1105-amino-acid polypeptide reads, in one-letter code: Tubulin-folding cofactor D (1105 aa).

Residues Asn122 and Asn126 are each glycosylated (N-linked (GlcNAc...) asparagine). HEAT repeat units follow at residues Ile308–Trp345, Leu347–Ala385, Ser401–Lys446, and Leu452–Ser489. The N-linked (GlcNAc...) asparagine glycan is linked to Asn373. Residues Asn721, Asn883, and Asn1083 are each glycosylated (N-linked (GlcNAc...) asparagine).

As to quaternary structure, interacts with alp21.

Its subcellular location is the cytoplasm. The protein resides in the cytoskeleton. Its function is as follows. Has a function in the folding of beta-tubulin. Microtubule-associated protein that is essential to direct polarized cell growth and to position the nucleus and septum to the center of the cell during mitosis. The polypeptide is Tubulin-folding cofactor D (alp1) (Schizosaccharomyces pombe (strain 972 / ATCC 24843) (Fission yeast)).